The chain runs to 316 residues: Beta-lactamase 3 (316 aa).

The signal sequence occupies residues 1–29; it reads MFVLNKFFTNSHYKKIVPVVLLSCATLIG. C30 carries the N-palmitoyl cysteine lipid modification. A lipid anchor (S-diacylglycerol cysteine) is attached at C30. Positions 34–53 are disordered; the sequence is NTQSESNKQTNQTNQVKQEN. A compositionally biased stretch (low complexity) spans 40 to 50; sequence NKQTNQTNQVK. S95 serves as the catalytic Acyl-ester intermediate. The active-site Proton acceptor is E191. 257-259 provides a ligand contact to substrate; sequence KTG.

Belongs to the class-A beta-lactamase family.

It is found in the cell membrane. The enzyme catalyses a beta-lactam + H2O = a substituted beta-amino acid. The protein is Beta-lactamase 3 (blaZ) of Bacillus cereus.